A 976-amino-acid polypeptide reads, in one-letter code: Vacuolar membrane protease (976 aa).

The Cytoplasmic segment spans residues 1–51 (MPLSTGLTLSSLNVMEKADNHYNMMTKQPPALSPVDMVSSRRGFNPIAFTP). A helical membrane pass occupies residues 52–72 (WPVTILSSLVYLAFIIPIIVV). The Vacuolar segment spans residues 73–399 (HHLVPPAPKE…DNGNDGKLNN (327 aa)). Residues Asn-147 and Asn-150 are each glycosylated (N-linked (GlcNAc...) asparagine). Residues His-206 and Asp-218 each coordinate Zn(2+). Glu-252 acts as the Proton acceptor in catalysis. Zn(2+)-binding residues include Glu-253, Glu-278, and His-351. Residues 400–420 (GAGTLGVWFDFYGSSFAVFEL) form a helical membrane-spanning segment. Over 421–427 (NTLFGHS) the chain is Cytoplasmic. Residues 428–448 (VALLVVAPLLLIATCVTLYTL) traverse the membrane as a helical segment. Topologically, residues 449-477 (DKMYMFSMYTYLSESGGQVSLYGLRGLFR) are vacuolar. A helical transmembrane segment spans residues 478–498 (FPLILGISTALTIGLAFLLMK). Over 499 to 519 (ANPFIIYSSPYAVWNPSALHR) the chain is Cytoplasmic. A helical transmembrane segment spans residues 520 to 540 (AYAFTWMFGMMWVLLVIATVY). Topologically, residues 541 to 550 (QKQHGIASSY) are vacuolar. A helical membrane pass occupies residues 551–571 (FIVFYFAGVSIATWISYLELF). At 572–675 (GLPTTQDYAR…HRLEQRWSIN (104 aa)) the chain is on the cytoplasmic side. Residues 590 to 633 (TPSSDSRLLAPSADELPPSGSAAGHDFNPEDVEDEEPTESTSLL) form a disordered region. The segment covering 618 to 627 (PEDVEDEEPT) has biased composition (acidic residues). Residues 676–696 (LISSAWILQFLFVAPIVIILL) traverse the membrane as a helical segment. The Vacuolar segment spans residues 697 to 718 (GQLGLFLTSATYQIGADGGSQL). Residues 719–739 (VIYVGIAVLSVLILLPLFPFI) form a helical membrane-spanning segment. The Cytoplasmic portion of the chain corresponds to 740–745 (HRFTYH). Residues 746–766 (IPTFLLFVLIGTLVYNLTAFP) form a helical membrane-spanning segment. Residues 767 to 976 (FSHSNRLKVA…LVEGSHSFKL (210 aa)) are Vacuolar-facing. N-linked (GlcNAc...) asparagine glycosylation occurs at Asn-848.

It belongs to the peptidase M28 family. Zn(2+) is required as a cofactor.

It is found in the vacuole membrane. In terms of biological role, may be involved in vacuolar sorting and osmoregulation. This is Vacuolar membrane protease from Arthroderma otae (strain ATCC MYA-4605 / CBS 113480) (Microsporum canis).